The sequence spans 267 residues: L-erythrulose-1-phosphate isomerase (267 aa).

H95 functions as the Electrophile in the catalytic mechanism. E168 acts as the Proton acceptor in catalysis. Substrate is bound by residues G174 and S211.

It belongs to the triosephosphate isomerase family. Homodimer.

The protein resides in the cytoplasm. It carries out the reaction L-erythrulose 1-phosphate = D-erythrulose 4-phosphate. The protein operates within carbohydrate metabolism; erythritol degradation. In terms of biological role, catalyzes the isomerization of D-erythrulose-4P to L-erythrulose-1P. This Rhizobium etli (strain ATCC 51251 / DSM 11541 / JCM 21823 / NBRC 15573 / CFN 42) protein is L-erythrulose-1-phosphate isomerase.